The sequence spans 825 residues: Breast cancer anti-estrogen resistance protein 3 homolog (825 aa).

Alanine 2 carries the post-translational modification N-acetylalanine. Phosphoserine is present on residues serine 32, serine 78, serine 83, serine 182, and serine 290. A disordered region spans residues 40 to 84; that stretch reads EAYPDVSIHGTLPRKKKGPPPIRSCDSASHMGTLPHSKSPRQSSP. Residues 154–253 enclose the SH2 domain; that stretch reads WYHGRIPRQV…QSGAIIFQPI (100 aa). The disordered stretch occupies residues 300-320; that stretch reads DHSLPRGNLLRNKDKSGSQPA. Lysine 334 is modified (N6-methyllysine). Phosphoserine is present on residues serine 358, serine 363, and serine 375. Omega-N-methylarginine is present on arginine 442. Phosphoserine is present on serine 471. The region spanning 548–818 is the Ras-GEF domain; that stretch reads DARVIAQHML…TALSRKLEPP (271 aa). Positions 744–748 are mediates the interaction with BCAR1/p130CAS; it reads LATAR.

Part of a complex comprised of PTPRA, BCAR1, BCAR3 and SRC; the formation of the complex is dependent on integrin mediated-tyrosine phosphorylation of PTPRA. Within the complex, interacts (via SH2 domain) with PTPRA (when phosphorylated on 'Tyr-792'). Interacts (via Ras-GEF domain) with BCAR1. Interacts (via Ras-GEF domain) with NEDD9. Interacts with PTK2/FAK1. Interacts with PTPN1. Interacts (via SH2 domain) with EGFR (when tyrosine-phosphorylated). Phosphorylated on tyrosine residues.

Its subcellular location is the cytoplasm. It localises to the cell junction. It is found in the focal adhesion. Its function is as follows. Acts as an adapter protein downstream of several growth factor receptors to promote cell proliferation, migration, and redistribution of actin fibers. Specifically involved in INS/insulin signaling pathway by mediating MAPK1/ERK2-MAPK3/ERK1 activation and DNA synthesis. Promotes insulin-mediated membrane ruffling. In response to vasoconstrictor peptide EDN1, involved in the activation of RAP1 downstream of PTK2B via interaction with phosphorylated BCAR1. Inhibits cell migration and invasion via regulation of TGFB-mediated matrix digestion, actin filament rearrangement, and inhibition of invadopodia activity. May inhibit TGFB/SMAD signaling, via facilitating BCAR1 and SMAD2 and/or SMAD3 interaction. Regulates EGF-induced DNA synthesis. Required for the maintenance of ocular lens morphology and structural integrity, potentially via regulation of focal adhesion complex signaling. Acts upstream of PTPRA to regulate the localization of BCAR1 and PTPRA to focal adhesions, via regulation of SRC-mediated phosphorylation of PTPRA. Positively regulates integrin-induced tyrosine phosphorylation of BCAR1. Acts as a guanine nucleotide exchange factor (GEF) for small GTPases RALA, RAP1A and RRAS. However, in a contrasting study, lacks GEF activity towards RAP1. The sequence is that of Breast cancer anti-estrogen resistance protein 3 homolog from Rattus norvegicus (Rat).